The sequence spans 280 residues: Virginiamycin B lyase (280 aa).

His215 is a binding site for substrate. Glu254 contacts Mg(2+). His256 (proton acceptor) is an active-site residue. Glu271 serves as a coordination point for Mg(2+).

The protein belongs to the Vgb family. As to quaternary structure, monomer. Mg(2+) serves as cofactor.

Its function is as follows. Inactivates the type B streptogramin antibiotics by linearizing the lactone ring at the ester linkage, generating a free phenylglycine carboxylate and converting the threonyl moiety into 2-amino-butenoic acid. This Mycobacterium sp. (strain KMS) protein is Virginiamycin B lyase.